The sequence spans 240 residues: UDP-2,3-diacylglucosamine hydrolase (240 aa).

The Mn(2+) site is built by D8, H10, D41, N79, and H114. 79 to 80 (NR) contacts substrate. Residues D122, S160, N164, K167, and H195 each contribute to the substrate site. Positions 195 and 197 each coordinate Mn(2+).

This sequence belongs to the LpxH family. It depends on Mn(2+) as a cofactor.

The protein resides in the cell inner membrane. It is found in the cytoplasm. It carries out the reaction UDP-2-N,3-O-bis[(3R)-3-hydroxytetradecanoyl]-alpha-D-glucosamine + H2O = 2-N,3-O-bis[(3R)-3-hydroxytetradecanoyl]-alpha-D-glucosaminyl 1-phosphate + UMP + 2 H(+). It functions in the pathway glycolipid biosynthesis; lipid IV(A) biosynthesis; lipid IV(A) from (3R)-3-hydroxytetradecanoyl-[acyl-carrier-protein] and UDP-N-acetyl-alpha-D-glucosamine: step 4/6. Its activity is regulated as follows. Inhibited by a sulfonyl piperazine compound that shows antibacterial activity against E.coli; LpxH is the cellular target of this compound. Inhibited by 0.01% (or more) Triton X-100 in vitro. In terms of biological role, hydrolyzes the pyrophosphate bond of UDP-2,3-diacylglucosamine to yield 2,3-diacylglucosamine 1-phosphate (lipid X) and UMP by catalyzing the attack of water at the alpha-P atom. Involved in the biosynthesis of lipid A, a phosphorylated glycolipid that anchors the lipopolysaccharide to the outer membrane of the cell. Is essential for E.coli growth. Does not cleave the unacylated UDP-GlcNAc, the mono-acylated UDP-3-O-(R)-3-hydroxymyristoyl-GlcNAc, and CDP-diacylglycerol. This chain is UDP-2,3-diacylglucosamine hydrolase, found in Escherichia coli (strain K12).